The following is a 230-amino-acid chain: MQQRRRPPIASRETLQALLSEGAQALGVALSDAQRGALLDYVALLAKWNAVYNLTAIRDPRQMLIQHILDSLSIVPHLGAHGAAAAALDVGSGGGLPGVVLAIALPGWRVTLNDIVHKKSAFQNQAKAELKLGNLSVVTGRVETLRPGADVPAKFDVIVSRAFADLADFVTLARHLVAPGGSIWAMKGVRPDEEIGRLPDGARVKQMIRLTVPSLDAERHLIEVELDEAI.

S-adenosyl-L-methionine is bound by residues Gly-91, Leu-96, 142 to 143 (VE), and Arg-161.

It belongs to the methyltransferase superfamily. RNA methyltransferase RsmG family.

The protein resides in the cytoplasm. It carries out the reaction guanosine(527) in 16S rRNA + S-adenosyl-L-methionine = N(7)-methylguanosine(527) in 16S rRNA + S-adenosyl-L-homocysteine. In terms of biological role, specifically methylates the N7 position of guanine in position 527 of 16S rRNA. The protein is Ribosomal RNA small subunit methyltransferase G of Burkholderia pseudomallei (strain K96243).